A 366-amino-acid polypeptide reads, in one-letter code: Aldo-keto reductase AFTS1 (366 aa).

Residue Asp75 coordinates NADP(+). Tyr80 serves as the catalytic Proton donor. Residue His172 coordinates substrate. NADP(+) contacts are provided by residues 202–203 (SS), Gln228, 257–267 (GSLASGRLARP), and 329–337 (SSVERIDEA).

This sequence belongs to the aldo/keto reductase family.

It participates in mycotoxin biosynthesis. Its function is as follows. Aldo-keto reductase; part of the gene clusters that mediate the biosynthesis of the host-selective toxins (HSTs) AF-toxins responsible for Alternaria black spot of strawberry disease by the strawberry pathotype. AF-toxin I and III are valine derivatives of 2,3-dyhydroxy-isovaleric acid and 2-hydroxy-isovaleric acid respectively, while AF II is an isoleucine derivative of 2-hydroxy-valeric acid. These derivatives are bound to a 9,10-epoxy-8-hydroxy-9-methyl-decatrienoic acid (EDA) moiety. On cellular level, AF-toxins affect plasma membrane of susceptible cells and cause a sudden increase in loss of K(+) after a few minutes of toxin treatment. The aldo-keto reductase AFTS1 catalyzes the conversion of 2-keto-isovaleric acid (2-KIV) to 2-hydroxy-isovaleric acid (2-HIV) by reduction of its ketone to an alcohol. The acyl-CoA ligase AFT1, the hydrolase AFT2 and the enoyl-CoA hydratases AFT3 and AFT6, but also the polyketide synthase AFT9, the acyl-CoA dehydrogenase AFT10, the cytochrome P450 monooxygenase AFT11 and the oxidoreductase AFT12 are all involved in the biosynthesis of the AK-, AF- and ACT-toxin common EDA structural moiety. The exact function of each enzyme, and of additional enzymes identified within the AF-toxin clusters have still to be determined. This is Aldo-keto reductase AFTS1 from Alternaria alternata (Alternaria rot fungus).